The primary structure comprises 738 residues: 1,4-alpha-glucan branching enzyme GlgB (738 aa).

D417 serves as the catalytic Nucleophile. E472 functions as the Proton donor in the catalytic mechanism.

It belongs to the glycosyl hydrolase 13 family. GlgB subfamily. Monomer.

It catalyses the reaction Transfers a segment of a (1-&gt;4)-alpha-D-glucan chain to a primary hydroxy group in a similar glucan chain.. Its pathway is glycan biosynthesis; glycogen biosynthesis. In terms of biological role, catalyzes the formation of the alpha-1,6-glucosidic linkages in glycogen by scission of a 1,4-alpha-linked oligosaccharide from growing alpha-1,4-glucan chains and the subsequent attachment of the oligosaccharide to the alpha-1,6 position. The polypeptide is 1,4-alpha-glucan branching enzyme GlgB (Burkholderia pseudomallei (strain K96243)).